Reading from the N-terminus, the 74-residue chain is Cytochrome b (74 aa).

The chain crosses the membrane as a helical span at residues 34 to 54 (FGSLLAICLVTQILTGLLLAM).

Belongs to the cytochrome b family. In terms of assembly, the cytochrome bc1 complex contains 11 subunits: 3 respiratory subunits (MT-CYB, CYC1 and UQCRFS1), 2 core proteins (UQCRC1 and UQCRC2) and 6 low-molecular weight proteins (UQCRH/QCR6, UQCRB/QCR7, UQCRQ/QCR8, UQCR10/QCR9, UQCR11/QCR10 and a cleavage product of UQCRFS1). This cytochrome bc1 complex then forms a dimer. The cofactor is heme.

Its subcellular location is the mitochondrion inner membrane. Its function is as follows. Component of the ubiquinol-cytochrome c reductase complex (complex III or cytochrome b-c1 complex) that is part of the mitochondrial respiratory chain. The b-c1 complex mediates electron transfer from ubiquinol to cytochrome c. Contributes to the generation of a proton gradient across the mitochondrial membrane that is then used for ATP synthesis. This chain is Cytochrome b (MT-CYB), found in Anser caerulescens (Snow goose).